A 1121-amino-acid chain; its full sequence is Transcription factor CSR2 (1121 aa).

A phosphoserine mark is found at Ser23, Ser46, and Ser127. Disordered stretches follow at residues 273 to 342, 513 to 532, 579 to 600, and 837 to 860; these read PLHT…RSLP, HTQL…PQKL, LKRN…GLAM, and IPQD…LQTS. Residues 276–310 show a composition bias toward polar residues; the sequence is TQRTSPSNTARTGNAMDTSNSDRASPASNNNTTDA. 3 stretches are compositionally biased toward low complexity: residues 318–329, 519–529, and 582–597; these read NNNPMNNNNSPA, SRPRSSSISSP, and NNSN…SSSG. A Phosphoserine modification is found at Ser327. The segment covering 837–846 has biased composition (basic and acidic residues); sequence IPQDKNHNEV. Residue Lys841 forms a Glycyl lysine isopeptide (Lys-Gly) (interchain with G-Cter in ubiquitin) linkage. Over residues 847–860 the composition is skewed to polar residues; it reads NDTNGNSNTSLQTS. At Ser987 the chain carries Phosphoserine. Over residues 999 to 1009 the composition is skewed to polar residues; sequence KTTAVSDSSNG. 2 disordered regions span residues 999–1022 and 1075–1121; these read KTTA…QARP and TPRY…EISS. The segment covering 1084-1093 has biased composition (low complexity); the sequence is TNTDYNYNDN.

This sequence belongs to the CSR2 family. Post-translationally, phosphorylated by CDC28.

It is found in the cytoplasm. The protein localises to the nucleus. Its function is as follows. Transcription factor involved in the regulation of fermentation and aerobic oxidation. Acts as a repressor of CYC1, which is involved in electron flow through the mitochondria under aerobic condition. Required for pseudohyphal formation upon nitrogen starvation. May be involved in viability at stationary phase and aging. The polypeptide is Transcription factor CSR2 (CSR2) (Saccharomyces cerevisiae (strain ATCC 204508 / S288c) (Baker's yeast)).